The chain runs to 301 residues: Probable alpha-L-glutamate ligase (301 aa).

The ATP-grasp domain maps to 104-287 (LQLLSRRGIG…VAGIIIEHLE (184 aa)). ATP-binding positions include lysine 141, 178–179 (EY), aspartate 187, and 211–213 (RSN). Mg(2+) is bound by residues aspartate 248, glutamate 260, and asparagine 262. The Mn(2+) site is built by aspartate 248, glutamate 260, and asparagine 262.

The protein belongs to the RimK family. Requires Mg(2+) as cofactor. Mn(2+) serves as cofactor.

This is Probable alpha-L-glutamate ligase from Pseudomonas fluorescens (strain SBW25).